Here is a 161-residue protein sequence, read N- to C-terminus: Nucleotide-binding protein Shal_3198 (161 aa).

The protein belongs to the YajQ family.

Functionally, nucleotide-binding protein. The sequence is that of Nucleotide-binding protein Shal_3198 from Shewanella halifaxensis (strain HAW-EB4).